Reading from the N-terminus, the 71-residue chain is uncharacterized protein (71 aa).

The segment at 1-20 (MQKLNKHLKKKKQKRKKMKK) is disordered.

This is an uncharacterized protein from Methanocaldococcus jannaschii (strain ATCC 43067 / DSM 2661 / JAL-1 / JCM 10045 / NBRC 100440) (Methanococcus jannaschii).